The following is a 380-amino-acid chain: Putative T-box protein 40 (380 aa).

A DNA-binding region (T-box) is located at residues Met11–Asp192. The tract at residues Glu188–Thr215 is disordered. Over residues Asn189–Thr215 the composition is skewed to basic and acidic residues.

The protein resides in the nucleus. In Caenorhabditis elegans, this protein is Putative T-box protein 40 (tbx-40).